Consider the following 301-residue polypeptide: Protoheme IX farnesyltransferase 1 (301 aa).

The next 9 membrane-spanning stretches (helical) occupy residues 29–49 (VVALMLLTVLVGMCLAVPHAV), 51–71 (VQPLLAGMLGIAMMAGSAAAL), 101–121 (ALIFAASLGSLGFIVLYSLVN), 123–143 (LTAWLTFASLIGYALVYTAYL), 150–170 (NIVIGGLAGAMPPLLGWTAVT), 177–197 (ALLLVIIIFTWTPPHFWALAI), 223–243 (CILLYTVLLAIACLLPVLVGM), 244–264 (CGPVYFVCSSLLSTGFIYKAW), and 275–295 (AMQVFRFSIYHLMLLFMALLL).

The protein belongs to the UbiA prenyltransferase family. Protoheme IX farnesyltransferase subfamily.

Its subcellular location is the cell inner membrane. It catalyses the reaction heme b + (2E,6E)-farnesyl diphosphate + H2O = Fe(II)-heme o + diphosphate. It functions in the pathway porphyrin-containing compound metabolism; heme O biosynthesis; heme O from protoheme: step 1/1. Converts heme B (protoheme IX) to heme O by substitution of the vinyl group on carbon 2 of heme B porphyrin ring with a hydroxyethyl farnesyl side group. This is Protoheme IX farnesyltransferase 1 from Shewanella baltica (strain OS185).